The primary structure comprises 195 residues: Ubiquitin-conjugating enzyme E2 T (195 aa).

Residues 2–152 (QRTSRLKREL…ARQWTEKHAR (151 aa)) enclose the UBC core domain. The active-site Glycyl thioester intermediate is Cys-86. Lys-91 is covalently cross-linked (Glycyl lysine isopeptide (Lys-Gly) (interchain with G-Cter in ubiquitin)). The span at 146-157 (WTEKHARQKTDE) shows a compositional bias: basic and acidic residues. A disordered region spans residues 146–195 (WTEKHARQKTDEEGMPGSLPEVGGSEGPSAAQKRKAGQLSSGGKRFCPDV). Lys-180 is covalently cross-linked (Glycyl lysine isopeptide (Lys-Gly) (interchain with G-Cter in ubiquitin)). Lys-189 participates in a covalent cross-link: Glycyl lysine isopeptide (Lys-Gly) (interchain with G-Cter in SUMO2).

This sequence belongs to the ubiquitin-conjugating enzyme family. As to quaternary structure, interacts with FANCL and BRCA1. Post-translationally, auto-ubiquitinated. Effects of auto-monoubiquitination at Lys-91 and Lys-180 are unclear.

It localises to the nucleus. The catalysed reaction is S-ubiquitinyl-[E1 ubiquitin-activating enzyme]-L-cysteine + [E2 ubiquitin-conjugating enzyme]-L-cysteine = [E1 ubiquitin-activating enzyme]-L-cysteine + S-ubiquitinyl-[E2 ubiquitin-conjugating enzyme]-L-cysteine.. It functions in the pathway protein modification; protein ubiquitination. Accepts ubiquitin from the E1 complex and catalyzes its covalent attachment to other proteins. Catalyzes monoubiquitination. Involved in mitomycin-C (MMC)-induced DNA repair: acts as a specific E2 ubiquitin-conjugating enzyme for the Fanconi anemia complex by associating with E3 ubiquitin-protein ligase FANCL and catalyzing monoubiquitination of FANCD2, a key step in the DNA damage pathway. Also mediates monoubiquitination of FANCL and FANCI. May contribute to ubiquitination and degradation of BRCA1. In vitro able to promote polyubiquitination using all 7 ubiquitin Lys residues, but may prefer 'Lys-11'-, 'Lys-27'-, 'Lys-48'- and 'Lys-63'-linked polyubiquitination. This is Ubiquitin-conjugating enzyme E2 T (UBE2T) from Bos taurus (Bovine).